The sequence spans 217 residues: UPF0502 protein VF_A0604 (217 aa).

Belongs to the UPF0502 family.

The sequence is that of UPF0502 protein VF_A0604 from Aliivibrio fischeri (strain ATCC 700601 / ES114) (Vibrio fischeri).